We begin with the raw amino-acid sequence, 84 residues long: Small ribosomal subunit protein uS17 (84 aa).

Belongs to the universal ribosomal protein uS17 family. In terms of assembly, part of the 30S ribosomal subunit.

One of the primary rRNA binding proteins, it binds specifically to the 5'-end of 16S ribosomal RNA. In Clostridium perfringens (strain ATCC 13124 / DSM 756 / JCM 1290 / NCIMB 6125 / NCTC 8237 / Type A), this protein is Small ribosomal subunit protein uS17.